Reading from the N-terminus, the 119-residue chain is Large ribosomal subunit protein uL18 (119 aa).

Residues 1-24 are disordered; it reads MITKQDKNQVRKKRHARVRSKISG. The segment covering 10-20 has biased composition (basic residues); it reads VRKKRHARVRS.

Belongs to the universal ribosomal protein uL18 family. Part of the 50S ribosomal subunit; part of the 5S rRNA/L5/L18/L25 subcomplex. Contacts the 5S and 23S rRNAs.

This is one of the proteins that bind and probably mediate the attachment of the 5S RNA into the large ribosomal subunit, where it forms part of the central protuberance. The polypeptide is Large ribosomal subunit protein uL18 (Lysinibacillus sphaericus (strain C3-41)).